Reading from the N-terminus, the 98-residue chain is NADH-ubiquinone oxidoreductase chain 4L (98 aa).

3 helical membrane-spanning segments follow: residues methionine 1 to isoleucine 21, serine 29 to leucine 49, and isoleucine 61 to valine 81.

It belongs to the complex I subunit 4L family. Core subunit of respiratory chain NADH dehydrogenase (Complex I) which is composed of 45 different subunits.

The protein resides in the mitochondrion inner membrane. The enzyme catalyses a ubiquinone + NADH + 5 H(+)(in) = a ubiquinol + NAD(+) + 4 H(+)(out). Core subunit of the mitochondrial membrane respiratory chain NADH dehydrogenase (Complex I) which catalyzes electron transfer from NADH through the respiratory chain, using ubiquinone as an electron acceptor. Part of the enzyme membrane arm which is embedded in the lipid bilayer and involved in proton translocation. The chain is NADH-ubiquinone oxidoreductase chain 4L (MT-ND4L) from Helarctos malayanus (Malayan sun bear).